The chain runs to 286 residues: Bifunctional protein FolD (286 aa).

NADP(+)-binding positions include 170 to 172 (GHS) and isoleucine 236.

Belongs to the tetrahydrofolate dehydrogenase/cyclohydrolase family. Homodimer.

The catalysed reaction is (6R)-5,10-methylene-5,6,7,8-tetrahydrofolate + NADP(+) = (6R)-5,10-methenyltetrahydrofolate + NADPH. It catalyses the reaction (6R)-5,10-methenyltetrahydrofolate + H2O = (6R)-10-formyltetrahydrofolate + H(+). It participates in one-carbon metabolism; tetrahydrofolate interconversion. In terms of biological role, catalyzes the oxidation of 5,10-methylenetetrahydrofolate to 5,10-methenyltetrahydrofolate and then the hydrolysis of 5,10-methenyltetrahydrofolate to 10-formyltetrahydrofolate. In Methanococcoides burtonii (strain DSM 6242 / NBRC 107633 / OCM 468 / ACE-M), this protein is Bifunctional protein FolD.